A 211-amino-acid chain; its full sequence is Protein-L-isoaspartate O-methyltransferase (211 aa).

Serine 62 is a catalytic residue.

It belongs to the methyltransferase superfamily. L-isoaspartyl/D-aspartyl protein methyltransferase family.

It is found in the cytoplasm. The catalysed reaction is [protein]-L-isoaspartate + S-adenosyl-L-methionine = [protein]-L-isoaspartate alpha-methyl ester + S-adenosyl-L-homocysteine. Its function is as follows. Catalyzes the methyl esterification of L-isoaspartyl residues in peptides and proteins that result from spontaneous decomposition of normal L-aspartyl and L-asparaginyl residues. It plays a role in the repair and/or degradation of damaged proteins. The sequence is that of Protein-L-isoaspartate O-methyltransferase from Shewanella baltica (strain OS223).